Consider the following 407-residue polypeptide: Arginine biosynthesis bifunctional protein ArgJ (407 aa).

Substrate is bound by residues threonine 157, lysine 183, threonine 194, glutamate 280, asparagine 402, and threonine 407. Residue threonine 194 is the Nucleophile of the active site.

This sequence belongs to the ArgJ family. Heterotetramer of two alpha and two beta chains.

Its subcellular location is the cytoplasm. The enzyme catalyses N(2)-acetyl-L-ornithine + L-glutamate = N-acetyl-L-glutamate + L-ornithine. The catalysed reaction is L-glutamate + acetyl-CoA = N-acetyl-L-glutamate + CoA + H(+). It functions in the pathway amino-acid biosynthesis; L-arginine biosynthesis; L-ornithine and N-acetyl-L-glutamate from L-glutamate and N(2)-acetyl-L-ornithine (cyclic): step 1/1. It participates in amino-acid biosynthesis; L-arginine biosynthesis; N(2)-acetyl-L-ornithine from L-glutamate: step 1/4. Catalyzes two activities which are involved in the cyclic version of arginine biosynthesis: the synthesis of N-acetylglutamate from glutamate and acetyl-CoA as the acetyl donor, and of ornithine by transacetylation between N(2)-acetylornithine and glutamate. The sequence is that of Arginine biosynthesis bifunctional protein ArgJ from Bacillus cereus (strain ATCC 10987 / NRS 248).